Consider the following 140-residue polypeptide: MPTINQLIRNGRSKIAKKSTAPAMQWGYNSLQRKQFASGGSPQKRGVCTRVYTTTPKKPNSALRKVARVRLTNTIEVSSYIPGIGHNLQEHSVVLVRGGRVKDLPGVRYHIVRGALDTQGVQKRMQARSKYGAKRPKKGK.

The residue at position 103 (Asp-103) is a 3-methylthioaspartic acid. Positions 120-140 (GVQKRMQARSKYGAKRPKKGK) are disordered. Positions 125–140 (MQARSKYGAKRPKKGK) are enriched in basic residues.

It belongs to the universal ribosomal protein uS12 family. In terms of assembly, part of the 30S ribosomal subunit. Contacts proteins S8 and S17. May interact with IF1 in the 30S initiation complex.

Its function is as follows. With S4 and S5 plays an important role in translational accuracy. Functionally, interacts with and stabilizes bases of the 16S rRNA that are involved in tRNA selection in the A site and with the mRNA backbone. Located at the interface of the 30S and 50S subunits, it traverses the body of the 30S subunit contacting proteins on the other side and probably holding the rRNA structure together. The combined cluster of proteins S8, S12 and S17 appears to hold together the shoulder and platform of the 30S subunit. The chain is Small ribosomal subunit protein uS12 from Desulfitobacterium hafniense (strain Y51).